The chain runs to 143 residues: ATP synthase subunit b', chloroplastic (143 aa).

A helical membrane pass occupies residues 12 to 31; sequence LPVMGLQVVLLSWLLEQILY.

It belongs to the ATPase B chain family. In terms of assembly, F-type ATPases have 2 components, F(1) - the catalytic core - and F(0) - the membrane proton channel. F(1) has five subunits: alpha(3), beta(3), gamma(1), delta(1), epsilon(1). F(0) has four main subunits: a(1), b(1), b'(1) and c(10-14). The alpha and beta chains form an alternating ring which encloses part of the gamma chain. F(1) is attached to F(0) by a central stalk formed by the gamma and epsilon chains, while a peripheral stalk is formed by the delta, b and b' chains.

It localises to the plastid. The protein resides in the chloroplast thylakoid membrane. Functionally, f(1)F(0) ATP synthase produces ATP from ADP in the presence of a proton or sodium gradient. F-type ATPases consist of two structural domains, F(1) containing the extramembraneous catalytic core and F(0) containing the membrane proton channel, linked together by a central stalk and a peripheral stalk. During catalysis, ATP synthesis in the catalytic domain of F(1) is coupled via a rotary mechanism of the central stalk subunits to proton translocation. In terms of biological role, component of the F(0) channel, it forms part of the peripheral stalk, linking F(1) to F(0). The b'-subunit is a diverged and duplicated form of b found in plants and photosynthetic bacteria. The polypeptide is ATP synthase subunit b', chloroplastic (Cyanidioschyzon merolae (strain NIES-3377 / 10D) (Unicellular red alga)).